The following is a 404-amino-acid chain: Succinyl-diaminopimelate desuccinylase (404 aa).

Residue His80 participates in Zn(2+) binding. Asp82 is an active-site residue. Asp113 is a Zn(2+) binding site. The active-site Proton acceptor is Glu147. The Zn(2+) site is built by Glu148, Glu176, and His373.

It belongs to the peptidase M20A family. DapE subfamily. Homodimer. Requires Zn(2+) as cofactor. The cofactor is Co(2+).

The enzyme catalyses N-succinyl-(2S,6S)-2,6-diaminopimelate + H2O = (2S,6S)-2,6-diaminopimelate + succinate. It functions in the pathway amino-acid biosynthesis; L-lysine biosynthesis via DAP pathway; LL-2,6-diaminopimelate from (S)-tetrahydrodipicolinate (succinylase route): step 3/3. Functionally, catalyzes the hydrolysis of N-succinyl-L,L-diaminopimelic acid (SDAP), forming succinate and LL-2,6-diaminopimelate (DAP), an intermediate involved in the bacterial biosynthesis of lysine and meso-diaminopimelic acid, an essential component of bacterial cell walls. This is Succinyl-diaminopimelate desuccinylase from Allorhizobium ampelinum (strain ATCC BAA-846 / DSM 112012 / S4) (Agrobacterium vitis (strain S4)).